Here is a 321-residue protein sequence, read N- to C-terminus: MHGRAYLLLHRDFCDLKENNYKGITAKPVSEDMMEWEVEIEGLQNSVWQGLVFQLTIHFTSEYNYAPPVVKFITIPFHPNVDPHTGQPCIDFLDNPEKWNTNYTLSSILLALQVMLSNPVLENPVNLEAARILVKDESLYRTILRLFNRPLQMKDDSQELPKDPRKCIRPIKTTSFSDYYQTWSRIATSKATEYYRTPLLKVPNFIGQYYKWKKMDLQHQKEWNLKYSVIKCWLARKRMPHEVTHSMEEIKLCPTLIPTTDEIFLESPTAINSITDIYETEEEGWKSDTSLYENDTDEPREEEVEDLISWTNTLNTNTSED.

In terms of domain architecture, UBC core spans 4 to 153; that stretch reads RAYLLLHRDF…LRLFNRPLQM (150 aa). Cys89 acts as the Glycyl thioester intermediate in catalysis. The interval 285-321 is disordered; the sequence is WKSDTSLYENDTDEPREEEVEDLISWTNTLNTNTSED. Residues 294-306 are compositionally biased toward acidic residues; it reads NDTDEPREEEVED. The segment covering 309 to 321 has biased composition (polar residues); that stretch reads SWTNTLNTNTSED.

Belongs to the ubiquitin-conjugating enzyme family. Autoubiquitinated in vitro in the presence of UBR5.

It catalyses the reaction S-ubiquitinyl-[E1 ubiquitin-activating enzyme]-L-cysteine + [E2 ubiquitin-conjugating enzyme]-L-cysteine = [E1 ubiquitin-activating enzyme]-L-cysteine + S-ubiquitinyl-[E2 ubiquitin-conjugating enzyme]-L-cysteine.. Its pathway is protein modification; protein ubiquitination. In terms of biological role, catalyzes the covalent attachment of ubiquitin to other proteins. In Homo sapiens (Human), this protein is Ubiquitin-conjugating enzyme E2 U (UBE2U).